Reading from the N-terminus, the 468-residue chain is UDP-N-acetylmuramate--L-alanine ligase (468 aa).

114-120 is a binding site for ATP; that stretch reads GTHGKTT.

Belongs to the MurCDEF family.

The protein localises to the cytoplasm. The catalysed reaction is UDP-N-acetyl-alpha-D-muramate + L-alanine + ATP = UDP-N-acetyl-alpha-D-muramoyl-L-alanine + ADP + phosphate + H(+). It functions in the pathway cell wall biogenesis; peptidoglycan biosynthesis. Functionally, cell wall formation. This Brucella anthropi (strain ATCC 49188 / DSM 6882 / CCUG 24695 / JCM 21032 / LMG 3331 / NBRC 15819 / NCTC 12168 / Alc 37) (Ochrobactrum anthropi) protein is UDP-N-acetylmuramate--L-alanine ligase.